The sequence spans 115 residues: MTGKGQGFGFGLGKMKELAEAFKKAQQVQEGAKRLQEELEQMEILGEAGGGLVKVIVSGNQEPKRVEISPDALAQGADLLSDLVTAAMKDAYIKSTATMRERMEDLTSGLELPGF.

The protein belongs to the YbaB/EbfC family. Homodimer.

It is found in the cytoplasm. Its subcellular location is the nucleoid. Functionally, binds to DNA and alters its conformation. May be involved in regulation of gene expression, nucleoid organization and DNA protection. The protein is Nucleoid-associated protein Ava_2322 of Trichormus variabilis (strain ATCC 29413 / PCC 7937) (Anabaena variabilis).